Reading from the N-terminus, the 335-residue chain is Phospho-N-acetylmuramoyl-pentapeptide-transferase (335 aa).

A run of 10 helical transmembrane segments spans residues 3-23 (LTLI…PHFI), 53-73 (GGTV…ILFF), 78-98 (SMGL…IGFL), 118-138 (LSLQ…PSGI), 143-163 (VFGF…FWVV), 175-195 (IDGL…VIAI), 200-220 (YDVL…FIFN), 226-246 (VFMG…ISIA), 251-271 (WTLL…MLQV), and 314-334 (VDAF…AILY).

It belongs to the glycosyltransferase 4 family. MraY subfamily. The cofactor is Mg(2+).

It localises to the cell membrane. It carries out the reaction UDP-N-acetyl-alpha-D-muramoyl-L-alanyl-gamma-D-glutamyl-L-lysyl-D-alanyl-D-alanine + di-trans,octa-cis-undecaprenyl phosphate = Mur2Ac(oyl-L-Ala-gamma-D-Glu-L-Lys-D-Ala-D-Ala)-di-trans,octa-cis-undecaprenyl diphosphate + UMP. The protein operates within cell wall biogenesis; peptidoglycan biosynthesis. Its function is as follows. Catalyzes the initial step of the lipid cycle reactions in the biosynthesis of the cell wall peptidoglycan: transfers peptidoglycan precursor phospho-MurNAc-pentapeptide from UDP-MurNAc-pentapeptide onto the lipid carrier undecaprenyl phosphate, yielding undecaprenyl-pyrophosphoryl-MurNAc-pentapeptide, known as lipid I. The sequence is that of Phospho-N-acetylmuramoyl-pentapeptide-transferase from Streptococcus uberis (strain ATCC BAA-854 / 0140J).